Consider the following 121-residue polypeptide: MLVIFLGILGLLANQVSSQLVGQLHPTENPSENELEYWCTYMECCQFCWDCQNGLCVNKLGNTTILENEYVHPCIVSRWLNKCMYDLGQGIDHVMVCSQPKYWNPYKILKKEWKENNSQNK.

An N-terminal signal peptide occupies residues 1 to 18; that stretch reads MLVIFLGILGLLANQVSS. Residues N62 and N116 are each glycosylated (N-linked (GlcNAc...) asparagine; by host).

The protein belongs to the asfivirus MGF 110 family.

Functionally, plays a role in virus cell tropism, and may be required for efficient virus replication in macrophages. This African swine fever virus (isolate Tick/South Africa/Pretoriuskop Pr4/1996) (ASFV) protein is Protein MGF 110-5L.